Here is a 301-residue protein sequence, read N- to C-terminus: Securin (301 aa).

Disordered stretches follow at residues 1-55, 82-120, and 218-284; these read MLPR…RTVL, DSPTILEPNSQGISRSAVQERSKRLSASPRRSSLTDTPL, and ASDQ…RSIH. The D-box 1 signature appears at 33-36; that stretch reads RAPL. The segment covering 38–50 has biased composition (polar residues); that stretch reads STKQSNAPSSVTV. The D-box 2 signature appears at 52 to 55; the sequence is RTVL. Polar residues-rich tracts occupy residues 88–98, 110–119, and 231–245; these read EPNSQGISRSA, PRRSSLTDTP, and VSKQSSSRTRLSTVY. 2 repeats span residues 250-260 and 270-280; these read ASGKSIPRPLS and ASGNSRRRPLS.

This sequence belongs to the securin family. As to quaternary structure, interacts with the caspase-like cut1, and prevents its protease activity probably by covering its active site. Ubiquitinated by the anaphase promoting complex (APC) at the onset of anaphase, conducting to its degradation.

The protein resides in the cytoplasm. Its subcellular location is the nucleus. Its function is as follows. Regulatory protein, which plays a central role in chromosome stability. Probably acts by blocking the action of key proteins. During the mitosis, it blocks separase/cut1 function, preventing the proteolysis of the cohesin complex and the subsequent segregation of the chromosomes. At the onset of anaphase, it is ubiquitinated, conducting to its destruction and to the liberation of cut1. The protein is Securin (cut2) of Schizosaccharomyces pombe (strain 972 / ATCC 24843) (Fission yeast).